Here is a 445-residue protein sequence, read N- to C-terminus: Probable glycine dehydrogenase (decarboxylating) subunit 1 (445 aa).

Belongs to the GcvP family. N-terminal subunit subfamily. As to quaternary structure, the glycine cleavage system is composed of four proteins: P, T, L and H. In this organism, the P 'protein' is a heterodimer of two subunits.

The catalysed reaction is N(6)-[(R)-lipoyl]-L-lysyl-[glycine-cleavage complex H protein] + glycine + H(+) = N(6)-[(R)-S(8)-aminomethyldihydrolipoyl]-L-lysyl-[glycine-cleavage complex H protein] + CO2. Functionally, the glycine cleavage system catalyzes the degradation of glycine. The P protein binds the alpha-amino group of glycine through its pyridoxal phosphate cofactor; CO(2) is released and the remaining methylamine moiety is then transferred to the lipoamide cofactor of the H protein. This Anaeromyxobacter sp. (strain Fw109-5) protein is Probable glycine dehydrogenase (decarboxylating) subunit 1.